A 318-amino-acid chain; its full sequence is L-lactate dehydrogenase (318 aa).

NAD(+) contacts are provided by residues Val-18, Asp-39, Lys-44, Tyr-69, and 83–84 (GA). Substrate contacts are provided by Gln-86 and Arg-92. NAD(+) is bound by residues Ser-105, 122 to 124 (VSN), and Ser-147. 124–127 (NPVD) contributes to the substrate binding site. Residue 152-155 (DTSR) participates in substrate binding. The active-site Proton acceptor is His-179. Position 225 is a phosphotyrosine (Tyr-225). Position 234 (Thr-234) interacts with substrate.

The protein belongs to the LDH/MDH superfamily. LDH family. Homotetramer.

Its subcellular location is the cytoplasm. It catalyses the reaction (S)-lactate + NAD(+) = pyruvate + NADH + H(+). The protein operates within fermentation; pyruvate fermentation to lactate; (S)-lactate from pyruvate: step 1/1. Its function is as follows. Catalyzes the conversion of lactate to pyruvate. In Clostridium botulinum (strain Kyoto / Type A2), this protein is L-lactate dehydrogenase.